Consider the following 530-residue polypeptide: Probable 1,4-beta-D-glucan cellobiohydrolase B (530 aa).

The signal sequence occupies residues 1-26 (MLASTFSYRMYKTALILAALLGSGQA). Positions 27–461 (QQVGTSQAEV…SNIKVGPIGS (435 aa)) are catalytic. The Nucleophile role is filled by E238. Residue E243 is the Proton donor of the active site. N296 is a glycosylation site (N-linked (GlcNAc...) asparagine). Residues 462-492 (TFNSGGSNPGGGTTTTAKPTTTTTTAGSPGG) form a disordered region. Residues 462–494 (TFNSGGSNPGGGTTTTAKPTTTTTTAGSPGGTG) are ser/Thr-rich linker. Over residues 475-488 (TTTAKPTTTTTTAG) the composition is skewed to low complexity. In terms of domain architecture, CBM1 spans 494 to 530 (GVAQHYGQCGGNGWQGPTTCASPYTCQKLNDFYSQCL). 2 disulfides stabilise this stretch: C502-C519 and C513-C529.

Belongs to the glycosyl hydrolase 7 (cellulase C) family.

The protein localises to the secreted. It carries out the reaction Hydrolysis of (1-&gt;4)-beta-D-glucosidic linkages in cellulose and cellotetraose, releasing cellobiose from the non-reducing ends of the chains.. Functionally, the biological conversion of cellulose to glucose generally requires three types of hydrolytic enzymes: (1) Endoglucanases which cut internal beta-1,4-glucosidic bonds; (2) Exocellobiohydrolases that cut the disaccharide cellobiose from the non-reducing end of the cellulose polymer chain; (3) Beta-1,4-glucosidases which hydrolyze the cellobiose and other short cello-oligosaccharides to glucose. The polypeptide is Probable 1,4-beta-D-glucan cellobiohydrolase B (cbhB) (Neosartorya fischeri (strain ATCC 1020 / DSM 3700 / CBS 544.65 / FGSC A1164 / JCM 1740 / NRRL 181 / WB 181) (Aspergillus fischerianus)).